The primary structure comprises 438 residues: Anaerobic glycerol-3-phosphate dehydrogenase subunit B (438 aa).

Belongs to the anaerobic G-3-P dehydrogenase subunit B family. Composed of a catalytic GlpA/B dimer and of membrane bound GlpC. It depends on FMN as a cofactor.

It carries out the reaction a quinone + sn-glycerol 3-phosphate = dihydroxyacetone phosphate + a quinol. It participates in polyol metabolism; glycerol degradation via glycerol kinase pathway; glycerone phosphate from sn-glycerol 3-phosphate (anaerobic route): step 1/1. Its function is as follows. Conversion of glycerol 3-phosphate to dihydroxyacetone. Uses fumarate or nitrate as electron acceptor. This is Anaerobic glycerol-3-phosphate dehydrogenase subunit B from Vibrio vulnificus (strain CMCP6).